The following is a 177-amino-acid chain: Dihydrofolate reductase type 9 (177 aa).

Positions Ser-3–Asn-167 constitute a DHFR domain.

This sequence belongs to the dihydrofolate reductase family. As to quaternary structure, homodimer.

The catalysed reaction is (6S)-5,6,7,8-tetrahydrofolate + NADP(+) = 7,8-dihydrofolate + NADPH + H(+). The protein operates within cofactor biosynthesis; tetrahydrofolate biosynthesis; 5,6,7,8-tetrahydrofolate from 7,8-dihydrofolate: step 1/1. Its function is as follows. Key enzyme in folate metabolism. Catalyzes an essential reaction for de novo glycine and purine synthesis, and for DNA precursor synthesis. The protein is Dihydrofolate reductase type 9 (dhfrIX) of Escherichia coli.